The primary structure comprises 1310 residues: Cadherin-related family member 2 (1310 aa).

Residues 1–20 (MAQLWLSCFLLPALVVSVAA) form the signal peptide. The Extracellular portion of the chain corresponds to 21-1154 (NVAPKFLANM…ESDLSKQLIS (1134 aa)). 3 Cadherin domains span residues 27–124 (LANM…APVF), 125–241 (QNTA…DPQF), and 242–353 (VREF…KPEF). Residues Asn29, Asn134, Asn182, Asn188, Asn195, Asn300, Asn355, Asn371, Asn401, Asn460, Asn565, Asn600, Asn616, Asn632, Asn680, Asn696, Asn701, Asn775, Asn821, Asn871, Asn877, Asn911, Asn932, and Asn1107 are each glycosylated (N-linked (GlcNAc...) asparagine). 6 Cadherin domains span residues 368–480 (AQVN…RPTF), 481–586 (PQSL…APVV), 586–695 (VSGS…LPIF), 696–808 (NQSS…PPTL), 810–928 (VASL…APYF), and 930–1058 (PENK…TPKE). A helical transmembrane segment spans residues 1155 to 1175 (VIIGLGVALLLVLVIMTMAFV). Residues 1176-1310 (CVRKSYNRKL…TNAGLDTTDL (135 aa)) lie on the Cytoplasmic side of the membrane. The mediates interaction with USH1C and MYO7B and is required for proper localization to microvilli tips and function in microvilli organization stretch occupies residues 1180–1310 (SYNRKLQAMK…TNAGLDTTDL (131 aa)). Position 1248 is a phosphoserine (Ser1248). Residues 1259-1268 (NSQEIKEHRP) are compositionally biased toward basic and acidic residues. The disordered stretch occupies residues 1259-1310 (NSQEIKEHRPPHTPPEPDPEPLSVVLLGRQAGASGQLEGPSYTNAGLDTTDL). At Ser1299 the chain carries Phosphoserine. The span at 1299–1310 (SYTNAGLDTTDL) shows a compositional bias: polar residues.

Part of the IMAC/intermicrovillar adhesion complex/intermicrovillar tip-link complex composed of ANKS4B, MYO7B, USH1C, CDHR2 and CDHR5. Interacts with MAST2. Interacts (via cytoplasmic domain) with USH1C and MYO7B; required for proper localization of CDHR2 to microvilli tips and its function in brush border differentiation. As to expression, highly expressed in liver, kidney and colon. Moderately expressed in small intestine. Down-regulated in a number of liver and colon cancers. Expressed in duodenum with higher expression in enterocytes along the villus axis and lower expression in crypts (at protein level).

Its subcellular location is the apical cell membrane. The protein localises to the cell projection. It is found in the microvillus membrane. The protein resides in the cell junction. In terms of biological role, intermicrovillar adhesion molecule that forms, via its extracellular domain, calcium-dependent heterophilic complexes with CDHR5 on adjacent microvilli. Thereby, controls the packing of microvilli at the apical membrane of epithelial cells. Through its cytoplasmic domain, interacts with microvillus cytoplasmic proteins to form the intermicrovillar adhesion complex/IMAC. This complex plays a central role in microvilli and epithelial brush border differentiation. May also play a role in cell-cell adhesion and contact inhibition in epithelial cells. In Homo sapiens (Human), this protein is Cadherin-related family member 2.